A 253-amino-acid polypeptide reads, in one-letter code: Phosphate import ATP-binding protein PstB 1 (253 aa).

One can recognise an ABC transporter domain in the interval 7 to 248 (LTVSDLSLYY…PEKQETSDYI (242 aa)). Residue 39-46 (GPSGCGKS) participates in ATP binding.

This sequence belongs to the ABC transporter superfamily. Phosphate importer (TC 3.A.1.7) family. As to quaternary structure, the complex is composed of two ATP-binding proteins (PstB), two transmembrane proteins (PstC and PstA) and a solute-binding protein (PstS).

It is found in the cell membrane. The catalysed reaction is phosphate(out) + ATP + H2O = ADP + 2 phosphate(in) + H(+). Part of the ABC transporter complex PstSACB involved in phosphate import. Responsible for energy coupling to the transport system. This Lactococcus lactis subsp. lactis (strain IL1403) (Streptococcus lactis) protein is Phosphate import ATP-binding protein PstB 1.